Here is a 356-residue protein sequence, read N- to C-terminus: Alanine racemase (356 aa).

The Proton acceptor; specific for D-alanine role is filled by lysine 35. An N6-(pyridoxal phosphate)lysine modification is found at lysine 35. Arginine 130 contacts substrate. Residue tyrosine 253 is the Proton acceptor; specific for L-alanine of the active site. Methionine 301 lines the substrate pocket.

It belongs to the alanine racemase family. Requires pyridoxal 5'-phosphate as cofactor.

It catalyses the reaction L-alanine = D-alanine. It functions in the pathway amino-acid biosynthesis; D-alanine biosynthesis; D-alanine from L-alanine: step 1/1. Its function is as follows. Catalyzes the interconversion of L-alanine and D-alanine. May also act on other amino acids. This chain is Alanine racemase (alr), found in Erwinia tasmaniensis (strain DSM 17950 / CFBP 7177 / CIP 109463 / NCPPB 4357 / Et1/99).